Here is a 214-residue protein sequence, read N- to C-terminus: Adenylate kinase (214 aa).

10-15 serves as a coordination point for ATP; it reads GAGKGT. The segment at 30–59 is NMP; sequence STGDILRAAVKDMTPMGGKAKSFMDAGALV. AMP contacts are provided by residues Thr31, Arg36, 57 to 59, 85 to 88, and Gln92; these read ALV and GFPR. Positions 126–163 are LID; sequence GRRTCRNCGKGFHVSFDPPKSSGICDECSGELYQRDDD. Arg127 lines the ATP pocket. The Zn(2+) site is built by Cys130, Cys133, Cys150, and Cys153. Residues Arg160 and Arg171 each coordinate AMP. Gly199 serves as a coordination point for ATP.

The protein belongs to the adenylate kinase family. In terms of assembly, monomer.

It is found in the cytoplasm. The enzyme catalyses AMP + ATP = 2 ADP. It participates in purine metabolism; AMP biosynthesis via salvage pathway; AMP from ADP: step 1/1. Catalyzes the reversible transfer of the terminal phosphate group between ATP and AMP. Plays an important role in cellular energy homeostasis and in adenine nucleotide metabolism. The polypeptide is Adenylate kinase (Geotalea daltonii (strain DSM 22248 / JCM 15807 / FRC-32) (Geobacter daltonii)).